We begin with the raw amino-acid sequence, 407 residues long: Na(+)-translocating NADH-quinone reductase subunit F (407 aa).

A helical membrane pass occupies residues 3 to 23 (IILGVVMFTLIVLALVLVILF). Residues 32-126 (GDITISVNDD…DMDIELPEEI (95 aa)) form the 2Fe-2S ferredoxin-type domain. [2Fe-2S] cluster contacts are provided by C69, C75, C78, and C110. One can recognise an FAD-binding FR-type domain in the interval 129–269 (VKKWECTVIS…SGPFGEFFAK (141 aa)). A catalytic region spans residues 272–389 (DAEMVFVGGG…PMMNAAVIGM (118 aa)).

It belongs to the NqrF family. In terms of assembly, composed of six subunits; NqrA, NqrB, NqrC, NqrD, NqrE and NqrF. The cofactor is [2Fe-2S] cluster. It depends on FAD as a cofactor.

It localises to the cell inner membrane. The enzyme catalyses a ubiquinone + n Na(+)(in) + NADH + H(+) = a ubiquinol + n Na(+)(out) + NAD(+). Functionally, NQR complex catalyzes the reduction of ubiquinone-1 to ubiquinol by two successive reactions, coupled with the transport of Na(+) ions from the cytoplasm to the periplasm. The first step is catalyzed by NqrF, which accepts electrons from NADH and reduces ubiquinone-1 to ubisemiquinone by a one-electron transfer pathway. This Vibrio campbellii (strain ATCC BAA-1116) protein is Na(+)-translocating NADH-quinone reductase subunit F.